We begin with the raw amino-acid sequence, 291 residues long: Inositol-1-monophosphatase (291 aa).

4 residues coordinate Mg(2+): E83, D104, I106, and D107. A substrate-binding site is contributed by E83. Substrate-binding positions include 106–109 (IDGT), R206, and D235. D235 provides a ligand contact to Mg(2+).

This sequence belongs to the inositol monophosphatase superfamily. It depends on Mg(2+) as a cofactor.

It carries out the reaction a myo-inositol phosphate + H2O = myo-inositol + phosphate. The protein is Inositol-1-monophosphatase (suhB) of Mycobacterium leprae (strain TN).